Consider the following 1455-residue polypeptide: DNA polymerase II large subunit (1455 aa).

Residues 1409–1440 (GLLENLSNGSKKTEKAEKAEKPRKKSDEKPKK) are disordered. Positions 1419-1438 (KKTEKAEKAEKPRKKSDEKP) are enriched in basic and acidic residues.

The protein belongs to the archaeal DNA polymerase II family. In terms of assembly, heterodimer of a large subunit and a small subunit. In terms of processing, this protein undergoes a protein self splicing that involves a post-translational excision of the intervening region (intein) followed by peptide ligation.

The enzyme catalyses DNA(n) + a 2'-deoxyribonucleoside 5'-triphosphate = DNA(n+1) + diphosphate. It carries out the reaction Exonucleolytic cleavage in the 3'- to 5'-direction to yield nucleoside 5'-phosphates.. Possesses two activities: a DNA synthesis (polymerase) and an exonucleolytic activity that degrades single-stranded DNA in the 3'- to 5'-direction. Has a template-primer preference which is characteristic of a replicative DNA polymerase. In Pyrococcus abyssi (strain GE5 / Orsay), this protein is DNA polymerase II large subunit (polC).